Consider the following 413-residue polypeptide: DNA primase DnaG (413 aa).

The Toprim domain maps to 168–246 (PNLIIVEGRA…KIDYVARAPV (79 aa)). 3 residues coordinate Mg(2+): E174, D219, and D221.

The protein belongs to the archaeal DnaG primase family. In terms of assembly, forms a ternary complex with MCM helicase and DNA. Component of the archaeal exosome complex. Mg(2+) is required as a cofactor.

It carries out the reaction ssDNA + n NTP = ssDNA/pppN(pN)n-1 hybrid + (n-1) diphosphate.. RNA polymerase that catalyzes the synthesis of short RNA molecules used as primers for DNA polymerase during DNA replication. Also part of the exosome, which is a complex involved in RNA degradation. Acts as a poly(A)-binding protein that enhances the interaction between heteromeric, adenine-rich transcripts and the exosome. The protein is DNA primase DnaG of Metallosphaera sedula (strain ATCC 51363 / DSM 5348 / JCM 9185 / NBRC 15509 / TH2).